Reading from the N-terminus, the 131-residue chain is Small ribosomal subunit protein uS10m (131 aa).

The protein belongs to the universal ribosomal protein uS10 family.

The protein resides in the mitochondrion. This is Small ribosomal subunit protein uS10m (mrps10) from Dictyostelium discoideum (Social amoeba).